We begin with the raw amino-acid sequence, 230 residues long: Acyl-protein thioesterase 1 (230 aa).

Catalysis depends on charge relay system residues Ser-119, Asp-174, and His-208. Lys-224 carries the post-translational modification N6-acetyllysine.

It belongs to the AB hydrolase superfamily. AB hydrolase 2 family. As to quaternary structure, homodimer.

Its subcellular location is the cytoplasm. The protein resides in the cell membrane. It is found in the nucleus membrane. It localises to the endoplasmic reticulum. The catalysed reaction is S-hexadecanoyl-L-cysteinyl-[protein] + H2O = L-cysteinyl-[protein] + hexadecanoate + H(+). It carries out the reaction 1-hexadecanoyl-sn-glycero-3-phosphocholine + H2O = sn-glycerol 3-phosphocholine + hexadecanoate + H(+). It catalyses the reaction a 1-(9Z-octadecenoyl)-2-acyl-sn-glycero-3-phosphocholine + H2O = a 2-acyl-sn-glycero-3-phosphocholine + (9Z)-octadecenoate + H(+). Functionally, acts as an acyl-protein thioesterase. Hydrolyzes fatty acids from S-acylated cysteine residues in proteins such as trimeric G alpha proteins or HRAS. Acts as a palmitoyl thioesterase that catalyzes depalmitoylation of proteins, such as ADRB2, KCNMA1 and SQSTM1. Acts as a negative regulator of autophagy by mediating palmitoylation of SQSTM1, decreasing affinity between SQSTM1 and ATG8 proteins and recruitment of ubiquitinated cargo proteins to autophagosomes. Acts as a lysophospholipase and hydrolyzes lysophosphatidylcholine (lyso-PC). Also hydrolyzes lysophosphatidylethanolamine (lyso-PE), lysophosphatidylinositol (lyso-PI) and lysophosphatidylserine (lyso-PS). Has much higher thioesterase activity than lysophospholipase activity. Contributes to the production of lysophosphatidic acid (LPA) during blood coagulation by recognizing and cleaving plasma phospholipids to generate lysophospholipids which in turn act as substrates for ENPP2 to produce LPA. The sequence is that of Acyl-protein thioesterase 1 (LYPLA1) from Pongo abelii (Sumatran orangutan).